A 236-amino-acid polypeptide reads, in one-letter code: Uridylate kinase (236 aa).

Lys-11–Gly-14 serves as a coordination point for ATP. Gly-53 is a binding site for UMP. Gly-54 and Arg-58 together coordinate ATP. Residues Asp-73 and Thr-134–Thr-141 contribute to the UMP site. 3 residues coordinate ATP: Thr-161, Tyr-167, and Asp-170.

Belongs to the UMP kinase family. As to quaternary structure, homohexamer.

Its subcellular location is the cytoplasm. The catalysed reaction is UMP + ATP = UDP + ADP. Its pathway is pyrimidine metabolism; CTP biosynthesis via de novo pathway; UDP from UMP (UMPK route): step 1/1. With respect to regulation, inhibited by UTP. Its function is as follows. Catalyzes the reversible phosphorylation of UMP to UDP. The sequence is that of Uridylate kinase from Hydrogenovibrio crunogenus (strain DSM 25203 / XCL-2) (Thiomicrospira crunogena).